A 314-amino-acid chain; its full sequence is ATP synthase gamma chain (314 aa).

The protein belongs to the ATPase gamma chain family. F-type ATPases have 2 components, CF(1) - the catalytic core - and CF(0) - the membrane proton channel. CF(1) has five subunits: alpha(3), beta(3), gamma(1), delta(1), epsilon(1). CF(0) has three main subunits: a, b and c.

It localises to the cellular thylakoid membrane. Functionally, produces ATP from ADP in the presence of a proton gradient across the membrane. The gamma chain is believed to be important in regulating ATPase activity and the flow of protons through the CF(0) complex. The chain is ATP synthase gamma chain from Crocosphaera subtropica (strain ATCC 51142 / BH68) (Cyanothece sp. (strain ATCC 51142)).